We begin with the raw amino-acid sequence, 207 residues long: Dephospho-CoA kinase (207 aa).

The DPCK domain occupies 10-207 (ILGLTGGIGS…FYLTLRGGQS (198 aa)). 18–23 (GSGKSA) is a binding site for ATP.

The protein belongs to the CoaE family.

The protein resides in the cytoplasm. It catalyses the reaction 3'-dephospho-CoA + ATP = ADP + CoA + H(+). The protein operates within cofactor biosynthesis; coenzyme A biosynthesis; CoA from (R)-pantothenate: step 5/5. In terms of biological role, catalyzes the phosphorylation of the 3'-hydroxyl group of dephosphocoenzyme A to form coenzyme A. The polypeptide is Dephospho-CoA kinase (Pseudomonas syringae pv. syringae (strain B728a)).